Here is a 254-residue protein sequence, read N- to C-terminus: Aspartate/glutamate leucyltransferase (254 aa).

It belongs to the R-transferase family. Bpt subfamily.

The protein resides in the cytoplasm. The enzyme catalyses N-terminal L-glutamyl-[protein] + L-leucyl-tRNA(Leu) = N-terminal L-leucyl-L-glutamyl-[protein] + tRNA(Leu) + H(+). It carries out the reaction N-terminal L-aspartyl-[protein] + L-leucyl-tRNA(Leu) = N-terminal L-leucyl-L-aspartyl-[protein] + tRNA(Leu) + H(+). In terms of biological role, functions in the N-end rule pathway of protein degradation where it conjugates Leu from its aminoacyl-tRNA to the N-termini of proteins containing an N-terminal aspartate or glutamate. This is Aspartate/glutamate leucyltransferase from Xylella fastidiosa (strain 9a5c).